The following is a 186-amino-acid chain: Protein TRL14 (186 aa).

N-linked (GlcNAc...) asparagine; by host glycosylation is found at N24, N64, and N72. The helical transmembrane segment at 143–163 (HAVWAGVVVSVALIALYMGSH) threads the bilayer.

Belongs to the RL11 family.

The protein localises to the virion membrane. The polypeptide is Protein TRL14 (Human cytomegalovirus (strain AD169) (HHV-5)).